The sequence spans 165 residues: Large ribosomal subunit protein uL10 (165 aa).

It belongs to the universal ribosomal protein uL10 family. As to quaternary structure, part of the ribosomal stalk of the 50S ribosomal subunit. The N-terminus interacts with L11 and the large rRNA to form the base of the stalk. The C-terminus forms an elongated spine to which L12 dimers bind in a sequential fashion forming a multimeric L10(L12)X complex.

Forms part of the ribosomal stalk, playing a central role in the interaction of the ribosome with GTP-bound translation factors. The protein is Large ribosomal subunit protein uL10 of Pectobacterium atrosepticum (strain SCRI 1043 / ATCC BAA-672) (Erwinia carotovora subsp. atroseptica).